The primary structure comprises 416 residues: Enterobactin exporter EntS (416 aa).

The Cytoplasmic segment spans residues 1 to 21 (MNKQSWLLNLSLLKTHPAFRA). The helical transmembrane segment at 22-42 (VFLARFISIVSLGLLGVAVPV) threads the bilayer. Topologically, residues 43 to 55 (QIQMMTHSTWQVG) are periplasmic. Residues 56–76 (LSVTLTGGAMFVGLMVGGVLA) traverse the membrane as a helical segment. The Cytoplasmic segment spans residues 77–83 (DRYERKK). The chain crosses the membrane as a helical span at residues 84–104 (VILLARGTCGIGFIGLCLNAL). Residues 105-109 (LPEPS) are Periplasmic-facing. Residues 110–130 (LLAIYLLGLWDGFFASLGVTA) form a helical membrane-spanning segment. Residues 131 to 156 (LLAATPALVGRENLMQAGAITMLTVR) are Cytoplasmic-facing. A helical transmembrane segment spans residues 157-177 (LGSVISPMIGGLLLATGGVAW). A topological domain (periplasmic) is located at residue Asn178. A helical transmembrane segment spans residues 179–199 (YGLAAAGTFITLLPLLSLPAL). At 200 to 218 (PPPPQPREHPLKSLLAGFR) the chain is on the cytoplasmic side. Residues 219–239 (FLLASPLVGGIALLGGLLTMA) form a helical membrane-spanning segment. The Periplasmic portion of the chain corresponds to 240-256 (SAVRVLYPALADNWQMS). A helical transmembrane segment spans residues 257–277 (AAQIGFLYAAIPLGAAIGALT). Topologically, residues 278-287 (SGKLAHSARP) are cytoplasmic. A helical transmembrane segment spans residues 288 to 307 (GLLMLLSTLGSFLAIGLFGL). Residues 308–313 (MPMWIL) are Periplasmic-facing. A helical membrane pass occupies residues 314 to 336 (GVVCLALFGWLSAVSSLLQYTML). Topologically, residues 337–356 (QTQTPEAMLGRINGLWTAQN) are cytoplasmic. A helical membrane pass occupies residues 357 to 377 (VTGDAIGAALLGGLGAMMTPV). A topological domain (periplasmic) is located at residue Ala378. The chain crosses the membrane as a helical span at residues 379-399 (SASASGFGLLIIGVLLLLVLV). Topologically, residues 400-416 (ELRRFRQTPPQMTASDS) are cytoplasmic.

This sequence belongs to the major facilitator superfamily. EntS (TC 2.A.1.38) family.

It is found in the cell inner membrane. Its function is as follows. Component of an export pathway for enterobactin. The protein is Enterobactin exporter EntS of Escherichia coli O7:K1 (strain IAI39 / ExPEC).